The following is a 2120-amino-acid chain: Separin (2120 aa).

Residue serine 1126 is modified to Phosphoserine. The disordered stretch occupies residues 1299–1355 (IKSVPGSEPSKTQGQKRSGRGRQKLASAPLRLNNTSQKGLEGRGLPCTPKPPDRIRQ). Serine 1396 and serine 1399 each carry phosphoserine. Disordered regions lie at residues 1412-1485 (AEEP…PEIM) and 1507-1561 (GSDG…PRLR). Basic residues-rich tracts occupy residues 1418 to 1432 (RGTA…RKGL) and 1454 to 1463 (RSRRAKKVAS). Positions 1464-1473 (RHCEERRPQR) are enriched in basic and acidic residues. A Phosphoserine modification is found at serine 1508. Positions 1548–1558 (PDKESDKDLGP) are enriched in basic and acidic residues. A Peptidase C50 domain is found at 1945–2040 (PRSTFYVLNP…SAALAVRGNL (96 aa)). Cysteine 2029 is a catalytic residue.

Interacts with PTTG1. Interacts with RAD21. In terms of processing, autocleaves. This function, which is not essential for its protease activity, is unknown. Post-translationally, phosphorylated by CDK1. There are 8 Ser/Thr phosphorylation sites. Among them, Ser-1126 phosphorylation is the major site, which conducts to the enzyme inactivation.

It localises to the cytoplasm. The protein localises to the nucleus. It carries out the reaction All bonds known to be hydrolyzed by this endopeptidase have arginine in P1 and an acidic residue in P4. P6 is often occupied by an acidic residue or by a hydroxy-amino-acid residue, the phosphorylation of which enhances cleavage.. Regulated by at least two independent mechanisms. First, it is inactivated via its interaction with securin/PTTG1, which probably covers its active site. The association with PTTG1 is not only inhibitory, since PTTG1 is also required for activating it, the enzyme being inactive in cells in which PTTG1 is absent. PTTG1 degradation at anaphase, liberates it and triggers RAD21 cleavage. Second, phosphorylation at Ser-1126 inactivates it. The complete phosphorylation during mitosis, is removed when cells undergo anaphase. Activation of the enzyme at the metaphase-anaphase transition probably requires the removal of both securin and inhibitory phosphate. Its function is as follows. Caspase-like protease, which plays a central role in the chromosome segregation by cleaving the SCC1/RAD21 subunit of the cohesin complex at the onset of anaphase. During most of the cell cycle, it is inactivated by different mechanisms. This chain is Separin (ESPL1), found in Homo sapiens (Human).